Consider the following 393-residue polypeptide: Riboflavin biosynthesis protein RibBA (393 aa).

A DHBP synthase region spans residues 1–200; the sequence is MQLDSIDTAL…IEDLEKYRKS (200 aa). Residues 27-28, aspartate 32, 139-143, and glutamate 163 each bind D-ribulose 5-phosphate; these read RE and RRGHT. Glutamate 28 provides a ligand contact to Mg(2+). Histidine 142 provides a ligand contact to Mg(2+). A GTP cyclohydrolase II region spans residues 201–393; that stretch reads SISKLDAKAK…TKKEKMGHLI (193 aa). Residue 249–253 coordinates GTP; the sequence is RIHSA. Zn(2+)-binding residues include cysteine 254, cysteine 265, and cysteine 267. Residues glutamine 270, 291 to 293, and threonine 313 each bind GTP; that span reads EGR. Aspartate 325 serves as the catalytic Proton acceptor; for GTP cyclohydrolase activity. Arginine 327 acts as the Nucleophile; for GTP cyclohydrolase activity in catalysis. GTP is bound by residues serine 348 and lysine 353.

The protein in the N-terminal section; belongs to the DHBP synthase family. This sequence in the C-terminal section; belongs to the GTP cyclohydrolase II family. Mg(2+) serves as cofactor. It depends on Mn(2+) as a cofactor. Zn(2+) is required as a cofactor.

It carries out the reaction D-ribulose 5-phosphate = (2S)-2-hydroxy-3-oxobutyl phosphate + formate + H(+). The enzyme catalyses GTP + 4 H2O = 2,5-diamino-6-hydroxy-4-(5-phosphoribosylamino)-pyrimidine + formate + 2 phosphate + 3 H(+). It functions in the pathway cofactor biosynthesis; riboflavin biosynthesis; 2-hydroxy-3-oxobutyl phosphate from D-ribulose 5-phosphate: step 1/1. It participates in cofactor biosynthesis; riboflavin biosynthesis; 5-amino-6-(D-ribitylamino)uracil from GTP: step 1/4. Catalyzes the conversion of D-ribulose 5-phosphate to formate and 3,4-dihydroxy-2-butanone 4-phosphate. Functionally, catalyzes the conversion of GTP to 2,5-diamino-6-ribosylamino-4(3H)-pyrimidinone 5'-phosphate (DARP), formate and pyrophosphate. The polypeptide is Riboflavin biosynthesis protein RibBA (Staphylococcus saprophyticus subsp. saprophyticus (strain ATCC 15305 / DSM 20229 / NCIMB 8711 / NCTC 7292 / S-41)).